We begin with the raw amino-acid sequence, 73 residues long: N-terminal-borealin-like protein (73 aa).

It belongs to the borealin family. As to quaternary structure, component of the aurora kinase complex composed of at least BIR1, BNL1, IPL1 and SLI15.

The protein resides in the nucleus. Its subcellular location is the cytoplasm. It localises to the cytoskeleton. It is found in the spindle. Component of the aurora kinase complex, also called chromosomal passenger complex (CPC), essential for chromosome segregation and metaphase chromosome alignment. Mediates the SLI15-BIR1 interaction within the CPC. This is N-terminal-borealin-like protein (NBL1) from Saccharomyces cerevisiae (strain ATCC 204508 / S288c) (Baker's yeast).